Here is a 126-residue protein sequence, read N- to C-terminus: Holo-[acyl-carrier-protein] synthase (126 aa).

Mg(2+) is bound by residues D9 and E58.

It belongs to the P-Pant transferase superfamily. AcpS family. The cofactor is Mg(2+).

It is found in the cytoplasm. The catalysed reaction is apo-[ACP] + CoA = holo-[ACP] + adenosine 3',5'-bisphosphate + H(+). In terms of biological role, transfers the 4'-phosphopantetheine moiety from coenzyme A to a Ser of acyl-carrier-protein. This chain is Holo-[acyl-carrier-protein] synthase, found in Klebsiella pneumoniae (strain 342).